The primary structure comprises 86 residues: Large ribosomal subunit protein bL27 (86 aa).

A disordered region spans residues 1–21 (MAHHKGGGSSRNGKDSNPQYL).

The protein belongs to the bacterial ribosomal protein bL27 family.

The sequence is that of Large ribosomal subunit protein bL27 from Coprothermobacter proteolyticus (strain ATCC 35245 / DSM 5265 / OCM 4 / BT).